The sequence spans 362 residues: Ribosomal RNA large subunit methyltransferase F (362 aa).

A compositionally biased stretch (basic residues) spans 1–28; sequence MNTPLKPKHGQKTNRKPKANKPVVKKQQ. The segment at 1-40 is disordered; it reads MNTPLKPKHGQKTNRKPKANKPVVKKQQTKQPPTHKVQGE.

The protein belongs to the methyltransferase superfamily. METTL16/RlmF family.

The protein localises to the cytoplasm. The catalysed reaction is adenosine(1618) in 23S rRNA + S-adenosyl-L-methionine = N(6)-methyladenosine(1618) in 23S rRNA + S-adenosyl-L-homocysteine + H(+). In terms of biological role, specifically methylates the adenine in position 1618 of 23S rRNA. This Vibrio cholerae serotype O1 (strain M66-2) protein is Ribosomal RNA large subunit methyltransferase F.